A 525-amino-acid polypeptide reads, in one-letter code: Peptide chain release factor 3 (525 aa).

Residues 9 to 276 (AKRRTFAIIS…GFTRYAPAPQ (268 aa)) enclose the tr-type G domain. GTP contacts are provided by residues 18 to 25 (SHPDAGKT), 86 to 90 (DTPGH), and 140 to 143 (NKFD).

Belongs to the TRAFAC class translation factor GTPase superfamily. Classic translation factor GTPase family. PrfC subfamily.

It is found in the cytoplasm. Functionally, increases the formation of ribosomal termination complexes and stimulates activities of RF-1 and RF-2. It binds guanine nucleotides and has strong preference for UGA stop codons. It may interact directly with the ribosome. The stimulation of RF-1 and RF-2 is significantly reduced by GTP and GDP, but not by GMP. The sequence is that of Peptide chain release factor 3 from Francisella tularensis subsp. novicida (strain U112).